The following is a 457-amino-acid chain: Multidrug resistance protein MdtK (457 aa).

Helical transmembrane passes span 11-31 (LLAL…MGFV), 53-73 (IWLP…PVIA), 93-113 (WLAG…GYII), 127-147 (AVGY…FQVA), 160-180 (GMVM…IFIY), 189-209 (GGVG…LAMV), 243-263 (LPIA…ALLV), 276-296 (IALN…AAVT), 314-334 (AART…IFTV), 350-370 (VVTL…SDSI), 387-407 (IFYI…YILA), and 418-438 (PAGF…MMML).

This sequence belongs to the multi antimicrobial extrusion (MATE) (TC 2.A.66.1) family. MdtK subfamily.

Its subcellular location is the cell inner membrane. Its function is as follows. Multidrug efflux pump that functions probably as a Na(+)/drug antiporter. This Escherichia coli O45:K1 (strain S88 / ExPEC) protein is Multidrug resistance protein MdtK.